Here is a 316-residue protein sequence, read N- to C-terminus: Serpentine receptor class gamma-8 (316 aa).

A run of 7 helical transmembrane segments spans residues 28-48 (FVQV…LYVV), 60-80 (PFFM…IFIT), 106-126 (LYYP…IFLT), 147-167 (FSRI…NTII), 186-206 (IIPW…VVMI), 235-255 (ACAA…MKVL), and 267-287 (LVQP…MIFA).

Belongs to the nematode receptor-like protein srg family.

The protein localises to the membrane. The chain is Serpentine receptor class gamma-8 (srg-8) from Caenorhabditis elegans.